Consider the following 190-residue polypeptide: UPF0301 protein Rmet_2743 (190 aa).

This sequence belongs to the UPF0301 (AlgH) family.

In Cupriavidus metallidurans (strain ATCC 43123 / DSM 2839 / NBRC 102507 / CH34) (Ralstonia metallidurans), this protein is UPF0301 protein Rmet_2743.